The sequence spans 247 residues: Pyrroloquinoline-quinone synthase (247 aa).

This sequence belongs to the PqqC family.

It carries out the reaction 6-(2-amino-2-carboxyethyl)-7,8-dioxo-1,2,3,4,7,8-hexahydroquinoline-2,4-dicarboxylate + 3 O2 = pyrroloquinoline quinone + 2 H2O2 + 2 H2O + H(+). It functions in the pathway cofactor biosynthesis; pyrroloquinoline quinone biosynthesis. In terms of biological role, ring cyclization and eight-electron oxidation of 3a-(2-amino-2-carboxyethyl)-4,5-dioxo-4,5,6,7,8,9-hexahydroquinoline-7,9-dicarboxylic-acid to PQQ. This is Pyrroloquinoline-quinone synthase from Rhizobium rhizogenes (strain K84 / ATCC BAA-868) (Agrobacterium radiobacter).